The sequence spans 429 residues: Acetyltransferase pyr8 (429 aa).

9 helical membrane passes run 12–32, 39–56, 69–89, 154–174, 221–241, 300–320, 324–344, 365–385, and 409–429; these read IAQE…VIIT, LRLA…RFSL, GVAA…LLIT, YVLR…LIHM, VCLN…RISA, IFFT…ILGI, GSGA…EDGV, LVGF…YLYP, and VAQK…GGEI.

The protein belongs to the wax synthase family.

It localises to the membrane. Its pathway is secondary metabolite biosynthesis; terpenoid biosynthesis. Acetyltransferase; part of the gene cluster that mediates the biosynthesis of pyripyropene A, a specific human acyl-coenzyme A:cholesterol acyltransferase 2 inhibitor. The first step of the pathway is the synthesis of nicotinyl-CoA from nicotinic acid by the nicotinic acid-CoA ligase pyr1. Nicotinyl-CoA is then a substrate of polyketide synthase pyr2 to produce 4-hydroxy-6-(3-pyridinyl)-2H-pyran-2-one (HPPO) which is further prenylated by the polyprenyl transferase pyr6 to yield farnesyl-HPPO. The next steps consist of an epoxidation of farnesyl-HPPO to epoxyfarnesyl-HPPO by FAD-dependent monooxygenase pyr5 and a cyclization of the terpenoid portion by the terpene cyclase pyr4 to yield deacetyl-pyripyropene E. The 2 cytochrome P450 monooxygenases pyr3 and pyr9, and the 2 acetyltransferases pyr7 and pyr8 are involved in the conversion of deacetyl-pyripyropene E into pyripyropene A through several cycles of oxidation and acetylation steps. Pyr7 acetylates deacetyl-pyripyropene E to pyripyropene E which is oxidized to 11-deacetyl-pyripyropene O by pyr3, which is in turn acetylated into pyripyropene O by pyr8. Pyripyropene O is then oxidized to deacetyl-pyripyropene A by pyr9. Deacetyl-pyripyropene A is finally acetylated to pyripyropene A by pyr8. The polypeptide is Acetyltransferase pyr8 (Aspergillus fumigatus (strain ATCC MYA-4609 / CBS 101355 / FGSC A1100 / Af293) (Neosartorya fumigata)).